The primary structure comprises 178 residues: Ribulose bisphosphate carboxylase small subunit, chloroplastic (178 aa).

Residues 1–54 (MASISSSVATVSRTAPAQANMVAPFTGLKSNAAFPTTKKANDFSTLPSNGGRVQ) constitute a chloroplast transit peptide.

The protein belongs to the RuBisCO small chain family. In terms of assembly, heterohexadecamer of 8 large and 8 small subunits.

Its subcellular location is the plastid. The protein localises to the chloroplast. In terms of biological role, ruBisCO catalyzes two reactions: the carboxylation of D-ribulose 1,5-bisphosphate, the primary event in carbon dioxide fixation, as well as the oxidative fragmentation of the pentose substrate. Both reactions occur simultaneously and in competition at the same active site. Although the small subunit is not catalytic it is essential for maximal activity. This chain is Ribulose bisphosphate carboxylase small subunit, chloroplastic, found in Helianthus annuus (Common sunflower).